The chain runs to 812 residues: Fibroblast growth factor receptor 1 (812 aa).

The first 20 residues, 1–20 (MFSGMSLLLWGVLLGAALSV), serve as a signal peptide directing secretion. Residues 21-371 (ARPPSTLPDE…PALLASPLQL (351 aa)) are Extracellular-facing. The Ig-like C2-type 1 domain maps to 25 to 118 (STLPDEVAPK…YTVLCSVNVS (94 aa)). A disulfide bridge links cysteine 54 with cysteine 100. N-linked (GlcNAc...) asparagine glycosylation is found at asparagine 76, asparagine 116, asparagine 133, asparagine 223, asparagine 236, asparagine 260, asparagine 292, asparagine 313, and asparagine 326. The segment at 121–153 (LPSAEDDDEDDDNSSSEEKAAENSKPNRPLWSH) is disordered. Residues 124–135 (AEDDDEDDDNSS) are compositionally biased toward acidic residues. 2 Ig-like C2-type domains span residues 154-242 (PEKM…YQLD) and 251-353 (PILQ…AWLT). The cysteines at positions 174 and 226 are disulfide-linked. The cysteines at positions 273 and 337 are disulfide-linked. The chain crosses the membrane as a helical span at residues 372 to 393 (EIIIYCTGAAFVSAMVVTIIIF). Residues 394–812 (KMKHPSKKSD…KYSNGGLKKR (419 aa)) are Cytoplasmic-facing. Tyrosine 457 carries the phosphotyrosine; by autocatalysis modification. A Protein kinase domain is found at 472–761 (LILGKPLGEG…LALSSNQEYL (290 aa)). Residues 478–484 (LGEGCFG), lysine 508, 556–558 (EYT), and asparagine 562 each bind ATP. Phosphotyrosine; by autocatalysis is present on residues tyrosine 577 and tyrosine 579. Aspartate 617 functions as the Proton acceptor in the catalytic mechanism. Residues arginine 621 and aspartate 635 each coordinate ATP. Residues tyrosine 647, tyrosine 648, tyrosine 724, and tyrosine 760 each carry the phosphotyrosine; by autocatalysis modification. The segment at 784 to 812 (SGEDSMFSHDPLPDEPCLPKYSNGGLKKR) is disordered.

The protein belongs to the protein kinase superfamily. Tyr protein kinase family. Fibroblast growth factor receptor subfamily. In terms of assembly, monomer. Homodimer after ligand binding. Interacts with il17rd. Autophosphorylated. Binding of FGF family members together with heparan sulfate proteoglycan or heparin promotes receptor dimerization and autophosphorylation on tyrosine residues. Autophosphorylation occurs in trans between the two FGFR molecules present in the dimer and proceeds in a highly ordered manner. Phosphotyrosine residues provide docking sites for interacting proteins and so are crucial for FGFR1 function and its regulation. Post-translationally, ubiquitinated. FGFR1 is rapidly ubiquitinated after autophosphorylation, leading to internalization and degradation. In terms of processing, N-glycosylated in the endoplasmic reticulum. The N-glycan chains undergo further maturation to an Endo H-resistant form in the Golgi apparatus.

The protein localises to the cell membrane. It localises to the nucleus. Its subcellular location is the cytoplasm. The protein resides in the cytosol. It is found in the cytoplasmic vesicle. It carries out the reaction L-tyrosyl-[protein] + ATP = O-phospho-L-tyrosyl-[protein] + ADP + H(+). With respect to regulation, present in an inactive conformation in the absence of bound ligand. Ligand binding leads to dimerization and activation by sequential autophosphorylation on tyrosine residues. Its function is as follows. Tyrosine-protein kinase that acts as a cell-surface receptor for fibroblast growth factors and plays an essential role in the regulation of embryonic development, cell proliferation, differentiation and migration. Required for normal mesoderm patterning and normal skeletogenesis. Phosphorylates PLCG1, FRS2, GAB1 and SHB. Ligand binding leads to the activation of several signaling cascades. Activation of PLCG1 leads to the production of the cellular signaling molecules diacylglycerol and inositol-1,4,5-trisphosphate. Phosphorylation of FRS2 triggers recruitment of GRB2, GAB1, PIK3R1 and SOS1, and mediates activation of RAS, MAPK1/ERK2, MAPK3/ERK1 and the MAP kinase signaling pathway, as well as of the AKT1 signaling pathway. Promotes phosphorylation of SHC1, STAT1 and PTPN11/SHP2. In the nucleus, enhances RPS6KA1 and CREB1 activity and contributes to the regulation of transcription. FGFR1 signaling is down-regulated by ubiquitination, internalization and degradation. In Xenopus laevis (African clawed frog), this protein is Fibroblast growth factor receptor 1 (fgfr1).